A 440-amino-acid polypeptide reads, in one-letter code: MSEFSQTVPELVAWARKNDFSISLPVDRLSFLLAVATLNGERLDGEMSEGELVDAFRHVSDAFEQTSETIGVRANNAINDMVRQRLLNRFTSEQAEGNAIYRLTPLGIGITDYYIRQREFSTLRLSMQLSIVAGELKRAADAAAEGGDEFHWHRNVYAPLKYSVAEIFDSIDLTQRIMDEQQQQVKDDIAQLLNKDWRAAISSCELLLSETSGTLRELQDTLEAAGDKLQANLLRIQDATMTHDDLHFVDRLVFDLQSKLDRIISWGQQSIDLWIGYDRHVHKFIRTAIDMDKNRVFAQRLRQSVQTYFDDPWALTYANADRLLDMRDEEMALRDDEVTGELPPDLEYEEFNEIREQLAAIIEEQLAIYKTRQTPLDLGLVVREYLAQYPRARHFDVARIVIDQAVRLGVAQADFTGLPAKWQPINDYGAKVQAHVIDKY.

A leucine-zipper region spans residues 208–236 (LSETSGTLRELQDTLEAAGDKLQANLLRI).

Belongs to the MukF family. In terms of assembly, interacts, and probably forms a ternary complex, with MukE and MukB via its C-terminal region. The complex formation is stimulated by calcium or magnesium. It is required for an interaction between MukE and MukB.

The protein localises to the cytoplasm. Its subcellular location is the nucleoid. Functionally, involved in chromosome condensation, segregation and cell cycle progression. May participate in facilitating chromosome segregation by condensation DNA from both sides of a centrally located replisome during cell division. Not required for mini-F plasmid partitioning. Probably acts via its interaction with MukB and MukE. Overexpression results in anucleate cells. It has a calcium binding activity. The chain is Chromosome partition protein MukF from Salmonella agona (strain SL483).